The chain runs to 222 residues: Eukaryotic translation initiation factor 4E-1 (222 aa).

Residues 1–22 show a composition bias toward basic and acidic residues; it reads MVDEVEKPASLEESKTNTREVE. The interval 1–37 is disordered; that stretch reads MVDEVEKPASLEESKTNTREVEEGAEEVIESDDTMSS. The segment covering 23–33 has biased composition (acidic residues); it reads EGAEEVIESDD. 2 EIF4G-binding regions span residues 47 to 50 and 57 to 93; these read HPLE and FDNP…NNIH. Residues 65–70, Lys97, and 115–116 contribute to the mRNA site; these read KQAAWG and WE. Cysteines 120 and 158 form a disulfide. The interval 141–150 is EIF4G-binding; sequence YTLLAMIGEQ. Residues 165–170 and 210–214 each bind mRNA; these read RVRQEK and KKLDR.

The protein belongs to the eukaryotic initiation factor 4E family. As to quaternary structure, EIF4F is a multi-subunit complex, the composition of which varies with external and internal environmental conditions. It is composed of at least EIF4A, EIF4E and EIF4G. EIF4E is also known to interact with other partners. In higher plants two isoforms of EIF4F have been identified, named isoform EIF4F and isoform EIF(iso)4F. Isoform EIF4F has subunits p220 and p26, whereas isoform EIF(iso)4F has subunits p82 and p28. In terms of processing, according to the redox status, the Cys-120-Cys-158 disulfide bridge may have a role in regulating protein function by affecting its ability to bind capped mRNA. In terms of tissue distribution, expressed ubiquitously in seedlings, roots, leaves, sepals, petals, anthers and dehisced pollen, with highest levels in pollen, maturing anthers and roots. Strongly expressed in susceptible plants but not in resistant ones.

The protein resides in the nucleus. It is found in the cytoplasm. Functionally, component of the protein complex eIF4F, which is involved in the recognition of the mRNA cap, ATP-dependent unwinding of 5'-terminal secondary structure and recruitment of mRNA to the ribosome. Recognizes and binds the 7-methylguanosine-containing mRNA cap during an early step in the initiation of protein synthesis and facilitates ribosome binding by inducing the unwinding of the mRNAs secondary structures. Key component of recessive resistance to potyviruses. (Microbial infection) Susceptibility host factor required for viral infection (e.g. potato virus Y (PVY) and pepper mottle virus (PepMoV)) by recruiting viral RNAs to the host ribosomal complex via an interaction with viral genome-linked protein (VPg). This chain is Eukaryotic translation initiation factor 4E-1, found in Nicotiana tabacum (Common tobacco).